The sequence spans 353 residues: Histidine biosynthesis bifunctional protein HisB (353 aa).

The interval M1–N164 is histidinol-phosphatase. The Nucleophile role is filled by D9. The Mg(2+) site is built by D9 and D11. The active-site Proton donor is the D11. C93, H95, C101, and C103 together coordinate Zn(2+). Mg(2+) is bound at residue D128. The tract at residues R165–L353 is imidazoleglycerol-phosphate dehydratase.

The protein in the N-terminal section; belongs to the histidinol-phosphatase family. This sequence in the C-terminal section; belongs to the imidazoleglycerol-phosphate dehydratase family. Requires Mg(2+) as cofactor. It depends on Zn(2+) as a cofactor.

The protein resides in the cytoplasm. The catalysed reaction is D-erythro-1-(imidazol-4-yl)glycerol 3-phosphate = 3-(imidazol-4-yl)-2-oxopropyl phosphate + H2O. It catalyses the reaction L-histidinol phosphate + H2O = L-histidinol + phosphate. It functions in the pathway amino-acid biosynthesis; L-histidine biosynthesis; L-histidine from 5-phospho-alpha-D-ribose 1-diphosphate: step 6/9. The protein operates within amino-acid biosynthesis; L-histidine biosynthesis; L-histidine from 5-phospho-alpha-D-ribose 1-diphosphate: step 8/9. The sequence is that of Histidine biosynthesis bifunctional protein HisB from Buchnera aphidicola subsp. Acyrthosiphon pisum (strain Tuc7).